Reading from the N-terminus, the 332-residue chain is DNA-directed RNA polymerase subunit alpha (332 aa).

The alpha N-terminal domain (alpha-NTD) stretch occupies residues 1 to 231; sequence MVREKVTVST…DLFIPFLHME (231 aa). The tract at residues 262–332 is alpha C-terminal domain (alpha-CTD); sequence LSLESLFIDQ…FALDLPKNLN (71 aa).

The protein belongs to the RNA polymerase alpha chain family. As to quaternary structure, in plastids the minimal PEP RNA polymerase catalytic core is composed of four subunits: alpha, beta, beta', and beta''. When a (nuclear-encoded) sigma factor is associated with the core the holoenzyme is formed, which can initiate transcription.

The protein resides in the plastid. The enzyme catalyses RNA(n) + a ribonucleoside 5'-triphosphate = RNA(n+1) + diphosphate. DNA-dependent RNA polymerase catalyzes the transcription of DNA into RNA using the four ribonucleoside triphosphates as substrates. The protein is DNA-directed RNA polymerase subunit alpha of Cuscuta japonica (Japanese dodder).